The primary structure comprises 285 residues: HTH-type transcriptional regulator MurR (285 aa).

In terms of domain architecture, HTH rpiR-type spans 1-77 (MLYLTKISNA…MALIGEYSAS (77 aa)). The H-T-H motif DNA-binding region spans 37-56 (SRQMAKQLGISQSSIVKFAQ). An SIS domain is found at 128–279 (IIEVISKAPF…SLKMIQRSSE (152 aa)).

Homotetramer.

It participates in amino-sugar metabolism; N-acetylmuramate degradation [regulation]. Represses the expression of the murPQ operon involved in the uptake and degradation of N-acetylmuramic acid (MurNAc). Binds to two adjacent inverted repeats within the operator region. MurNAc 6-phosphate, the substrate of MurQ, is the specific inducer that weakens binding of MurR to the operator. The polypeptide is HTH-type transcriptional regulator MurR (Shigella boydii serotype 18 (strain CDC 3083-94 / BS512)).